The chain runs to 247 residues: MSNEFIYGIHAVRAVLDKEPERFIEAYVLKGRQDDRLMPILNELQMVGVSLQQMTRKTLDDKAHGANHQGIIARVKPAKQLNENDLDDILAKHASPLLLILDGVTDPHNLGACLRNADAAGVAAVIVPKDKSAPMTATVSKVACGAAETVPLVRVTNLARTMRHLQEQGIWIVGTAGEATHDIYQAKLTGSLAIVMGAEGDGMRRLTRETCDDLIKIPMAGAVSSLNVSVASGICLFEAVRQRLASQ.

3 residues coordinate S-adenosyl-L-methionine: Gly197, Ile217, and Leu226.

It belongs to the class IV-like SAM-binding methyltransferase superfamily. RNA methyltransferase TrmH family. RlmB subfamily.

The protein resides in the cytoplasm. The catalysed reaction is guanosine(2251) in 23S rRNA + S-adenosyl-L-methionine = 2'-O-methylguanosine(2251) in 23S rRNA + S-adenosyl-L-homocysteine + H(+). In terms of biological role, specifically methylates the ribose of guanosine 2251 in 23S rRNA. The sequence is that of 23S rRNA (guanosine-2'-O-)-methyltransferase RlmB from Vibrio vulnificus (strain CMCP6).